The sequence spans 361 residues: Probable cysteine protease RD19B (361 aa).

Residues 1-24 form the signal peptide; sequence MDYHLRVLFSVSLIFVFVSVSVCG. Residues 25–131 constitute a propeptide, activation peptide; it reads DEDVLIRQVV…NQAPILPTQN (107 aa). Cystine bridges form between Cys-153–Cys-203 and Cys-187–Cys-237. Cys-156 is a catalytic residue. The N-linked (GlcNAc...) asparagine glycan is linked to Asn-250. Cysteines 293 and 347 form a disulfide. Catalysis depends on residues His-299 and Asn-326.

The protein belongs to the peptidase C1 family.

The protein localises to the lytic vacuole. Its function is as follows. Probable thiol protease. This chain is Probable cysteine protease RD19B, found in Arabidopsis thaliana (Mouse-ear cress).